A 2572-amino-acid polypeptide reads, in one-letter code: Zinc finger homeobox protein 2 (2572 aa).

Disordered regions lie at residues 1 to 107 and 343 to 425; these read MATL…GLPP and LSPP…ADDY. The span at 8–36 shows a compositional bias: low complexity; that stretch reads STTGTTPSPGHNAPSLPSDTFSSSTPSDP. Polar residues-rich tracts occupy residues 44-53 and 389-398; these read ASSTSENMRS and LNQSSPTSKE. 2 consecutive C2H2-type zinc fingers follow at residues 453–476 and 508–532; these read LKCPKCNWHYKYQQTLDVHMREKH and YRCDVCNYSTTTKGNLSIHMQSDKH. Disordered stretches follow at residues 537 to 566, 608 to 655, and 675 to 710; these read QGFQAGPGGQGSPPEASLPPSAGDKEPKTK, LPPG…LRPD, and RKFPTSAPGSLSPDAHLPPSQLLGSSSDSLPTSPPP. Pro residues predominate over residues 615 to 628; the sequence is PGPPPPPGATPTSP. Residues 696 to 705 are compositionally biased toward low complexity; it reads LLGSSSDSLP. 2 consecutive C2H2-type zinc fingers follow at residues 821-845 and 870-894; these read LRCNICDFESNSKEKMQLHARGAAH and YHCLLCAWETPSRLAVLQHLRTPAH. The segment at 929–974 is disordered; that stretch reads QLRTPGKAPVTPLAEPPTPEKDAQNKTEQLASEETENKTGPSRDSA. The span at 954 to 974 shows a compositional bias: polar residues; that stretch reads KTEQLASEETENKTGPSRDSA. Residues 1009–1032 form a C2H2-type 5 zinc finger; sequence YRCPLCQEQLVGRPALHFHLSHLH. Residues 1061–1171 form a disordered region; the sequence is PTLSPLDNGQ…PAPADSRHPL (111 aa). The segment covering 1120-1132 has biased composition (pro residues); that stretch reads GQPPSPAPSPVPE. C2H2-type zinc fingers lie at residues 1191 to 1217 and 1248 to 1272; these read YKCTVCKESFTQKNILLVHYNSVSHLH and FKCTVCRVSYNQSSTLEIHMRSVLH. Disordered stretches follow at residues 1269–1325, 1389–1408, and 1415–1434; these read SVLH…FLSP, LPAATPPPPPQPPKAELAER, and MAKEGNEAGPSSPPDPLPNE. Basic and acidic residues predominate over residues 1279–1311; it reads TKTDSKIEGPERSQEEPKEGETEGEVGTEKKGP. Over residues 1392–1401 the composition is skewed to pro residues; it reads ATPPPPPQPP. The C2H2-type 8 zinc finger occupies 1480-1503; that stretch reads LACGACGKLFSNMLILKTHEEHVH. The segment at 1528 to 1591 is disordered; that stretch reads PPLAEPPKPP…SSRGNLPPLV (64 aa). Residues 1595–1654 constitute a DNA-binding region (homeobox 1); the sequence is RRFSRTKFTEFQTQALQSFFETSAYPKDGEVERLASLLGLASRVVVVWFQNARQKARKNA. A C2H2-type 9; degenerate zinc finger spans residues 1670–1696; sequence SGCRRCHATFSCVFELVRHLKKCYDDQ. A compositionally biased stretch (acidic residues) spans 1696 to 1724; that stretch reads QTLEEEEEEAERGEEEEEVEEEEVEEEQG. Disordered stretches follow at residues 1696 to 1769, 1820 to 1860, 1912 to 2065, 2268 to 2327, and 2398 to 2431; these read QTLE…SPAH, AATS…DKRL, ERKG…GMGQ, VQTA…NDAL, and NALLQPPPQPPEPTATAPPKPPELPAPGEGEAGE. Residues 1728–1738 are compositionally biased toward pro residues; sequence PAGPEGPLPEP. Residues 1769-1791 form a C2H2-type 10 zinc finger; the sequence is HTCDQCAISFSSQDLLTSHRRLH. Positions 1857–1916 form a DNA-binding region, homeobox 2; the sequence is DKRLRTTILPEQLEILYRWYMQDSNPTRKMLDCISEEVGLKKRVVQVWFQNTRARERKGQ. Positions 1925-1939 are enriched in low complexity; it reads PSPAVKPPATATPAS. A compositionally biased stretch (basic and acidic residues) spans 1949-1963; the sequence is KVDDGTGREAPKREA. Residues 1991–2004 show a composition bias toward pro residues; the sequence is TPEPPLPLLPPPPP. The span at 2017 to 2044 shows a compositional bias: low complexity; sequence SPESEACSLSAGDLSDSSASSLAEPESP. Positions 2045-2061 are enriched in gly residues; the sequence is GAGGTSGGPGGGTGVPD. The homeobox 3 DNA-binding region spans 2065-2124; it reads QRRYRTQMSSLQLKIMKACYEAYRTPTMQECEVLGEEIGLPKRVIQVWFQNARAKEKKAK. Polar residues predominate over residues 2284 to 2293; sequence DQTNTSTAGT. The span at 2305-2315 shows a compositional bias: basic and acidic residues; the sequence is LGDKVSSERKP. Residues 2402–2422 are compositionally biased toward pro residues; sequence QPPPQPPEPTATAPPKPPELP. The C2H2-type 11; degenerate zinc finger occupies 2451 to 2471; sequence YLCRQCKMAFDGEAPATAHQR. A C2H2-type 12 zinc finger spans residues 2495–2519; that stretch reads YHCLACEVLLSGREALASHLRSSAH. Residues 2551–2572 form a disordered region; the sequence is EARLPHTDSNPKTTTTSTLLAL. Over residues 2563–2572 the composition is skewed to low complexity; sequence TTTTSTLLAL.

The protein localises to the nucleus. In terms of biological role, transcriptional regulator that is critical for the regulation of pain perception and processing of noxious stimuli. This chain is Zinc finger homeobox protein 2 (ZFHX2), found in Homo sapiens (Human).